Reading from the N-terminus, the 487-residue chain is Solute carrier family 22 member 15-like (487 aa).

Residues 22-42 (AFLTLLQVYVACQSMLIVLVG) traverse the membrane as a helical segment. N-linked (GlcNAc...) asparagine glycosylation is present at asparagine 70. The next 11 membrane-spanning stretches (helical) occupy residues 90–110 (LASSLFFAGLLIGNILFGPLS), 117–137 (PVYLSGLFFDITFGYCTALAP), 141–161 (VFAVSRFFVGIMNGGMALVSF), 178–198 (SLTNLIFAVGIAFYALLGFYI), 203–223 (TLAFVANSPGIFFFLLSFLLP), 286–306 (ILLMYIWYVCSLVYYGLTLNA), 315–335 (LNVALYGLVEVPAFPLCLYFI), 345–365 (ATAGFLGFAGFACIFTIFLPE), 374–394 (TVLALFGKLSVSAAFNVVYIY), 406–426 (AGLGVCAMACRFGGILSPFIP), and 435–455 (MPFVAFGISGISAGILSLLLP).

This sequence belongs to the major facilitator (TC 2.A.1) superfamily. Organic cation transporter (TC 2.A.1.19) family.

It localises to the membrane. Probably transports organic cations. This Xenopus tropicalis (Western clawed frog) protein is Solute carrier family 22 member 15-like (slc22a15b).